Consider the following 488-residue polypeptide: MNLEETMPLVFERSIPGRIGFSLPESDVPETNAGDYFDQAYIRSVPADLPELSELEIMRHYTNLSNHNFGVDSGFYPLGSCTMKYNPKINEKVARFPGFANIHPNQPESSVQGALELLYDLQTSLVEITGMDEVTLQPAAGAHGEWTGLMLIRAFHEKNGDTKRTKVIIPDSAHGTNPASAAVAGFDVVTVKSNEKGLVDVADLKKVVGEDTAALMLTNPNTLGLFEKDIVEMAEIVHEAGGKLYYDGANLNAIMAKVRPGDMGFDVVHLNLHKTFTGPHGGGGPGSGPIGVKKELIPFLPTPVLTKKDEGYTFDYNYPDSIGRVKPYYGNFGINVRAYTYIRTMGPDGLKLVTEYAVLNANYMMRKLQEAYDLPFDQVCKHEFVLSGNRQKKLGVRTVDIAKRLLDHNFHPPTVYFPLIVGEAIMIEPTETESKETLDSFIDTMLKIAKEAEENPEIVQEAPHSTYVKRLDETRAARKPILRYQKEV.

Lysine 274 bears the N6-(pyridoxal phosphate)lysine mark.

Belongs to the GcvP family. C-terminal subunit subfamily. In terms of assembly, the glycine cleavage system is composed of four proteins: P, T, L and H. In this organism, the P 'protein' is a heterodimer of two subunits. It depends on pyridoxal 5'-phosphate as a cofactor.

The enzyme catalyses N(6)-[(R)-lipoyl]-L-lysyl-[glycine-cleavage complex H protein] + glycine + H(+) = N(6)-[(R)-S(8)-aminomethyldihydrolipoyl]-L-lysyl-[glycine-cleavage complex H protein] + CO2. The glycine cleavage system catalyzes the degradation of glycine. The P protein binds the alpha-amino group of glycine through its pyridoxal phosphate cofactor; CO(2) is released and the remaining methylamine moiety is then transferred to the lipoamide cofactor of the H protein. In Listeria monocytogenes serotype 4a (strain HCC23), this protein is Probable glycine dehydrogenase (decarboxylating) subunit 2.